The chain runs to 354 residues: uncharacterized protein (354 aa).

The protein belongs to the asfivirus B354L family.

This is an uncharacterized protein from Ornithodoros (relapsing fever ticks).